Reading from the N-terminus, the 248-residue chain is 3,4-dihydroxyphthalate decarboxylase (248 aa).

The active-site Proton donor/acceptor is glutamate 90. 4 residues coordinate a divalent metal cation: glutamate 90, histidine 109, histidine 111, and histidine 177.

It belongs to the aldolase class II family. A divalent metal cation is required as a cofactor.

It catalyses the reaction 3,4-dihydroxyphthalate + H(+) = 3,4-dihydroxybenzoate + CO2. It participates in xenobiotic degradation; phthalate degradation. Functionally, catalyzes the decarboxylation of 3,4-dihydroxyphthalate to protocatechuate (3,4-dihydroxybenzoate) during phthalate metabolism. The sequence is that of 3,4-dihydroxyphthalate decarboxylase from Arthrobacter keyseri.